The following is a 406-amino-acid chain: Arginine biosynthesis bifunctional protein ArgJ (406 aa).

Residues T152, K179, T190, E277, N401, and S406 each contribute to the substrate site. Catalysis depends on T190, which acts as the Nucleophile.

Belongs to the ArgJ family. In terms of assembly, heterotetramer of two alpha and two beta chains.

Its subcellular location is the cytoplasm. The catalysed reaction is N(2)-acetyl-L-ornithine + L-glutamate = N-acetyl-L-glutamate + L-ornithine. It catalyses the reaction L-glutamate + acetyl-CoA = N-acetyl-L-glutamate + CoA + H(+). The protein operates within amino-acid biosynthesis; L-arginine biosynthesis; L-ornithine and N-acetyl-L-glutamate from L-glutamate and N(2)-acetyl-L-ornithine (cyclic): step 1/1. Its pathway is amino-acid biosynthesis; L-arginine biosynthesis; N(2)-acetyl-L-ornithine from L-glutamate: step 1/4. Its function is as follows. Catalyzes two activities which are involved in the cyclic version of arginine biosynthesis: the synthesis of N-acetylglutamate from glutamate and acetyl-CoA as the acetyl donor, and of ornithine by transacetylation between N(2)-acetylornithine and glutamate. The polypeptide is Arginine biosynthesis bifunctional protein ArgJ (Neisseria gonorrhoeae (strain ATCC 700825 / FA 1090)).